Here is a 1382-residue protein sequence, read N- to C-terminus: DNA-directed RNA polymerase subunit beta'' (1382 aa).

Zn(2+)-binding residues include Cys-224, Cys-294, Cys-301, and Cys-304.

This sequence belongs to the RNA polymerase beta' chain family. RpoC2 subfamily. As to quaternary structure, in plastids the minimal PEP RNA polymerase catalytic core is composed of four subunits: alpha, beta, beta', and beta''. When a (nuclear-encoded) sigma factor is associated with the core the holoenzyme is formed, which can initiate transcription. The cofactor is Zn(2+).

The protein localises to the plastid. The protein resides in the chloroplast. It catalyses the reaction RNA(n) + a ribonucleoside 5'-triphosphate = RNA(n+1) + diphosphate. Its function is as follows. DNA-dependent RNA polymerase catalyzes the transcription of DNA into RNA using the four ribonucleoside triphosphates as substrates. The protein is DNA-directed RNA polymerase subunit beta'' of Dioscorea elephantipes (Elephant's foot yam).